The chain runs to 377 residues: Serine protease grass (377 aa).

A signal peptide spans 1 to 26 (MMIASSLAVLYGIAIVSSMGVQSARA). Positions 31–89 (DCTTPDGDQGQCMPFSSCRTIEERLTEAQKAGQKVPADYASYLQKALCGEFNGVRHFCC) constitute a Clip domain. 6 cysteine pairs are disulfide-bonded: C32–C88, C42–C78, C48–C89, C111–C243, C148–C164, and C188–C197. The interval 91–118 (SANIQHNSKVMSLFKDENFDCGNFLSQR) is linker. One can recognise a Peptidase S1 domain in the interval 119 to 373 (VSNGYEVKLS…YVQWITDTMA (255 aa)). The active-site Charge relay system is H163. Positions 179, 181, 184, and 187 each coordinate Ca(2+). D223 functions as the Charge relay system in the catalytic mechanism. N-linked (GlcNAc...) asparagine glycans are attached at residues N230 and N270. Cystine bridges form between C290/C304 and C314/C349. The active-site Charge relay system is the S318.

Belongs to the peptidase S1 family. CLIP subfamily. Post-translationally, proteolytically cleaved by a tryspin-like protease which is likely to activate grass.

Its subcellular location is the secreted. In terms of biological role, endopeptidase. Plays a key role in innate immunity by activating the Toll pathway in response to fungal and Gram-positive bacterial infections, presumably downstream of pattern-recognition receptors (PRR), such as PGRP-SA, GNBP1 and GNBP3, and upstream of spz processing enzyme SPE. This chain is Serine protease grass, found in Drosophila melanogaster (Fruit fly).